Here is a 248-residue protein sequence, read N- to C-terminus: UPF0246 protein A1G_03985 (248 aa).

It belongs to the UPF0246 family.

This chain is UPF0246 protein A1G_03985, found in Rickettsia rickettsii (strain Sheila Smith).